The sequence spans 255 residues: Aliphatic sulfonates import ATP-binding protein SsuB (255 aa).

An ABC transporter domain is found at 7–231; the sequence is IKEKAFVQEG…PRNRTTPDFQ (225 aa). An ATP-binding site is contributed by 39–46; sequence GPSGCGKS.

The protein belongs to the ABC transporter superfamily. Aliphatic sulfonates importer (TC 3.A.1.17.2) family. The complex is composed of two ATP-binding proteins (SsuB), two transmembrane proteins (SsuC) and a solute-binding protein (SsuA).

The protein resides in the cell membrane. It carries out the reaction ATP + H2O + aliphatic sulfonate-[sulfonate-binding protein]Side 1 = ADP + phosphate + aliphatic sulfonateSide 2 + [sulfonate-binding protein]Side 1.. Functionally, part of the ABC transporter complex SsuABC involved in aliphatic sulfonates import. Responsible for energy coupling to the transport system. Is also involved in taurine transport. The protein is Aliphatic sulfonates import ATP-binding protein SsuB of Bacillus subtilis (strain 168).